We begin with the raw amino-acid sequence, 211 residues long: MIDTHDITGLILAGGRGSRMGGVDKGLQNFRGLPLALHTLMRLQPQVGDVMINANRNLAAYESFGVPVWPDGLADYAGPLAGFLTGLERCETPWLLTVPCDTPLFPPDLAARLAQAATREGADIAMAAAPEADERDGTVRVRTQPVFCLLRVTLLESLVRFTQGGGRKIDRWTEQHACAVVAFDQPGDDPHAFYNANTLAELHALEGLGHR.

GTP contacts are provided by residues 12–14 (LAG), K25, N53, D71, and D101. D101 serves as a coordination point for Mg(2+).

Belongs to the MobA family. As to quaternary structure, monomer. Mg(2+) is required as a cofactor.

Its subcellular location is the cytoplasm. It carries out the reaction Mo-molybdopterin + GTP + H(+) = Mo-molybdopterin guanine dinucleotide + diphosphate. Its function is as follows. Transfers a GMP moiety from GTP to Mo-molybdopterin (Mo-MPT) cofactor (Moco or molybdenum cofactor) to form Mo-molybdopterin guanine dinucleotide (Mo-MGD) cofactor. The polypeptide is Molybdenum cofactor guanylyltransferase (Acidovorax ebreus (strain TPSY) (Diaphorobacter sp. (strain TPSY))).